A 653-amino-acid chain; its full sequence is MGRQAWISSLCPLPRPCPFLLLLLLLVVPRGAQPQAGRNHTEPPGPNVTATPVTPTIPVISGNVSTSTESAPAAETEGPQSERYPPPSSSSPPGGQVLTESGQPCRFPFRYGGRMLHSCTSEGSAYRKWCATTHNYDRDRAWGYCAEVTLPVEGPAILDPCASGPCLNGGTCSSTHDHGSYHCSCPLAFTGKDCGTEKCFDETRYEYFEVGDHWARVSEGHVEQCGCMEGQARCEDTHHTACLSSPCLNGGTCHLIVGTGTSVCTCPLGYAGRFCNIVPTEHCFLGNGTEYRGVASTAASGLSCLAWNSDLLYQELHVDSVAAAVLLGLGPHAYCRNPDKDERPWCYVVKDNALSWEYCRLTACESLARVHSQTPEILAALPESAPAVRPTCGKRHKKRTFLRPRIIGGSSSLPGSHPWLAAIYIGNSFCAGSLVHTCWVVSAAHCFANSPPRDSITVVLGQHFFNRTTDVTQTFGIEKYVPYTLYSVFNPNNHDLVLIRLKKKGERCAVRSQFVQPICLPEAGSSFPTGHKCQIAGWGHMDENVSSYSNSLLEALVPLVADHKCSSPEVYGADISPNMLCAGYFDCKSDACQGDSGGPLVCEKNGVAYLYGIISWGDGCGRLNKPGVYTRVANYVDWINDRIRPPKRPVATS.

The N-terminal stretch at 1–34 (MGRQAWISSLCPLPRPCPFLLLLLLLVVPRGAQP) is a signal peptide. The interval 34 to 98 (PQAGRNHTEP…SSSPPGGQVL (65 aa)) is disordered. The propeptide at 35–369 (QAGRNHTEPP…RLTACESLAR (335 aa)) is removed in mature form. N-linked (GlcNAc...) asparagine glycosylation is found at N39, N47, and N63. Residues 47 to 59 (NVTATPVTPTIPV) are compositionally biased toward low complexity. The 48-residue stretch at 100–147 (ESGQPCRFPFRYGGRMLHSCTSEGSAYRKWCATTHNYDRDRAWGYCAE) folds into the Fibronectin type-II domain. Cystine bridges form between C105/C130, C119/C145, C161/C172, C166/C183, C185/C194, C199/C227, C225/C234, C242/C253, C247/C264, C266/C275, C283/C364, C304/C346, C335/C359, C392/C519, C430/C446, C438/C508, C533/C602, C565/C581, and C592/C620. The EGF-like 1 domain occupies 157–195 (ILDPCASGPCLNGGTCSSTHDHGSYHCSCPLAFTGKDCG). One can recognise a Fibronectin type-I domain in the interval 197–237 (EKCFDETRYEYFEVGDHWARVSEGHVEQCGCMEGQARCEDT). Positions 238 to 276 (HHTACLSSPCLNGGTCHLIVGTGTSVCTCPLGYAGRFCN) constitute an EGF-like 2 domain. Residues 283–364 (CFLGNGTEYR…SWEYCRLTAC (82 aa)) form the Kringle domain. N-linked (GlcNAc...) asparagine glycosylation occurs at N287. The 239-residue stretch at 406-644 (IIGGSSSLPG…YVDWINDRIR (239 aa)) folds into the Peptidase S1 domain. H445 acts as the Charge relay system in catalysis. N-linked (GlcNAc...) asparagine glycosylation occurs at N466. D495 functions as the Charge relay system in the catalytic mechanism. N544 carries N-linked (GlcNAc...) asparagine glycosylation. Catalysis depends on S596, which acts as the Charge relay system.

Belongs to the peptidase S1 family. In terms of assembly, heterodimer of a short chain and a long chain linked by a disulfide bond. The active form of HGFAC presents in the serum is derived from the COOH-terminal region of the precursor by the cleavage of bonds between Arg-369 and Val-370 and Arg-405 and Ile-406.

Its subcellular location is the secreted. In terms of biological role, serine protease that hydrolyzes the inactive zymogen hepatocyte growth factor (HGFsc) to an activated disulfide-linked heterodimer, then initiating hepatocyte growth factor receptor signaling pathway. This chain is Hepatocyte growth factor activator serine protease, found in Mus musculus (Mouse).